We begin with the raw amino-acid sequence, 383 residues long: Lipoyl synthase, mitochondrial (383 aa).

Polar residues predominate over residues 25-34 (STPSLLQTLD). The segment at 25–44 (STPSLLQTLDPSVPSPPAAG) is disordered. 7 residues coordinate [4Fe-4S] cluster: Cys110, Cys115, Cys121, Cys141, Cys145, Cys148, and Ser357. In terms of domain architecture, Radical SAM core spans 126–346 (ETGTATATIM…RALGVEMGFR (221 aa)).

Belongs to the radical SAM superfamily. Lipoyl synthase family. Requires [4Fe-4S] cluster as cofactor.

The protein resides in the mitochondrion. It catalyses the reaction [[Fe-S] cluster scaffold protein carrying a second [4Fe-4S](2+) cluster] + N(6)-octanoyl-L-lysyl-[protein] + 2 oxidized [2Fe-2S]-[ferredoxin] + 2 S-adenosyl-L-methionine + 4 H(+) = [[Fe-S] cluster scaffold protein] + N(6)-[(R)-dihydrolipoyl]-L-lysyl-[protein] + 4 Fe(3+) + 2 hydrogen sulfide + 2 5'-deoxyadenosine + 2 L-methionine + 2 reduced [2Fe-2S]-[ferredoxin]. It functions in the pathway protein modification; protein lipoylation via endogenous pathway; protein N(6)-(lipoyl)lysine from octanoyl-[acyl-carrier-protein]: step 2/2. Functionally, catalyzes the radical-mediated insertion of two sulfur atoms into the C-6 and C-8 positions of the octanoyl moiety bound to the lipoyl domains of lipoate-dependent enzymes, thereby converting the octanoylated domains into lipoylated derivatives. The polypeptide is Lipoyl synthase, mitochondrial (Zea mays (Maize)).